Consider the following 315-residue polypeptide: Mycothiol acetyltransferase (315 aa).

2 N-acetyltransferase domains span residues 8–145 (VETS…LPLD) and 163–315 (VSLR…DATA). E39 lines the 1D-myo-inositol 2-(L-cysteinylamino)-2-deoxy-alpha-D-glucopyranoside pocket. Residues 81 to 83 (LVV) and 89 to 94 (HHGVGT) each bind acetyl-CoA. 1D-myo-inositol 2-(L-cysteinylamino)-2-deoxy-alpha-D-glucopyranoside is bound by residues E190, K229, and E243. 247 to 249 (LGV) provides a ligand contact to acetyl-CoA. Y281 serves as a coordination point for 1D-myo-inositol 2-(L-cysteinylamino)-2-deoxy-alpha-D-glucopyranoside. Residue 286 to 291 (NTVAIR) participates in acetyl-CoA binding.

It belongs to the acetyltransferase family. MshD subfamily. As to quaternary structure, monomer.

The catalysed reaction is 1D-myo-inositol 2-(L-cysteinylamino)-2-deoxy-alpha-D-glucopyranoside + acetyl-CoA = mycothiol + CoA + H(+). Its function is as follows. Catalyzes the transfer of acetyl from acetyl-CoA to desacetylmycothiol (Cys-GlcN-Ins) to form mycothiol. The protein is Mycothiol acetyltransferase of Sanguibacter keddieii (strain ATCC 51767 / DSM 10542 / NCFB 3025 / ST-74).